Here is a 247-residue protein sequence, read N- to C-terminus: ATP synthase subunit a, chloroplastic (247 aa).

A run of 5 helical transmembrane segments spans residues 38-58 (QVLITSWVVIAILLGSATLAV), 95-115 (VPFIGTMFLFIFVSNWSGALL), 134-154 (INTTVALALLTSVAYFYAGLT), 199-219 (LVVVVLVSLVPSIVPIPVMFL), and 220-240 (GLFTSGIQALIFATLAAAYIG).

Belongs to the ATPase A chain family. F-type ATPases have 2 components, CF(1) - the catalytic core - and CF(0) - the membrane proton channel. CF(1) has five subunits: alpha(3), beta(3), gamma(1), delta(1), epsilon(1). CF(0) has four main subunits: a, b, b' and c.

Its subcellular location is the plastid. The protein resides in the chloroplast thylakoid membrane. Key component of the proton channel; it plays a direct role in the translocation of protons across the membrane. The polypeptide is ATP synthase subunit a, chloroplastic (Vitis vinifera (Grape)).